The primary structure comprises 361 residues: G-protein coupled receptor 68 (361 aa).

Residues 1–12 (MGNITADNTSMN) are Extracellular-facing. 2 N-linked (GlcNAc...) asparagine glycosylation sites follow: Asn3 and Asn8. The helical transmembrane segment at 13–49 (CDIDHTIHQTLAPVVYVMVLVVGFPANCLSLYYGYLQ) threads the bilayer. 2 disulfide bridges follow: Cys13-Cys258 and Cys94-Cys172. At 50–53 (IKAR) the chain is on the cytoplasmic side. Residues 54 to 84 (NELGVYLCNLTVADLFYICSLPFWLQYVLQH) form a helical membrane-spanning segment. Residues 85-89 (DHWSH) are Extracellular-facing. A helical membrane pass occupies residues 90 to 125 (DDLSCQVCGILLYENIYISVGFLCCISIDRYLAVAH). Over 126–133 (PFRFHQFR) the chain is Cytoplasmic. A helical transmembrane segment spans residues 134 to 160 (TLKAAMGVSALIWVKELLTSIYFLMHE). Over 161 to 176 (EVVEDADRHRVCFEHY) the chain is Extracellular. Positions 161–176 (EVVEDADRHRVCFEHY) are extracellular loop 2 (ECL2). The chain crosses the membrane as a helical span at residues 177–214 (PLEPRQRGINYYRFLVGFLFPICLLLASYRGILRAVRR). Over 215–218 (SHGT) the chain is Cytoplasmic. Residues 219 to 254 (QKSRKDQIQRLVLSTVVIFLACFLPYHVLLLVRSLW) traverse the membrane as a helical segment. The Extracellular segment spans residues 255-260 (ESSCDF). Residues 261–289 (AKGIFNAYHFSLLLTSFNCVADPVLYCFV) traverse the membrane as a helical segment. Over 290–361 (SETTHRDLAR…MGGSPAGGLS (72 aa)) the chain is Cytoplasmic. The disordered stretch occupies residues 340-361 (LHPAFQTPHPPGMGGSPAGGLS). Positions 351-361 (GMGGSPAGGLS) are enriched in gly residues.

This sequence belongs to the G-protein coupled receptor 1 family.

The protein localises to the cell membrane. Activated by a network of residues that connects an extracellular-facing cavity to Glu-149, a conserved charged residue buried in the transmembrane core of the receptor. Protonation likely drives conformational changes in extracellular loop 2 (ECL2), which stabilizes movement of transmembrane 3 (TM3) and a series of rearrangements that connect the extracellular-facing cavity to Glu-149, a residue only conserved in proton-sensing G-protein coupled receptors. Activated in an allosteric manner by divalent metal ions at the extracellular surface following the order: Cd(2+) &gt; Co(2+) &gt; Ni(2+) &gt; Zn(2+) &gt; Fe(2+) &gt; Ca(2+) &gt; Mg(2+). In terms of biological role, proton-sensing G-protein coupled receptor activated by extracellular pH, which is required to monitor pH changes and generate adaptive reactions. The receptor is almost silent at pH 7.8 but fully activated at pH 6.8. Ligand binding causes a conformation change that triggers signaling via guanine nucleotide-binding proteins (G proteins) and modulates the activity of downstream effectors, such as phospholipase C. GPR68 is mainly coupled to G(q) G proteins and mediates production of diacylglycerol (DAG) and inositol 1,4,5-trisphosphate (IP3). Acts as a key mechanosensor of fluid shear stress and membrane stretch. Expressed in endothelial cells of small-diameter resistance arteries, where it mediates flow-induced dilation in response to shear stress. May represents an osteoblastic pH sensor regulating cell-mediated responses to acidosis in bone. Acts as a regulator of calcium-sensing receptor CASR in a seesaw manner: GPR68-mediated signaling inhibits CASR signaling in response to protons, while CASR inhibits GPR68 in presence of extracellular calcium. This Bos taurus (Bovine) protein is G-protein coupled receptor 68 (GPR68).